The following is a 285-amino-acid chain: Bifunctional protein FolD (285 aa).

NADP(+) contacts are provided by residues 165 to 167 (GRS) and serine 190.

Belongs to the tetrahydrofolate dehydrogenase/cyclohydrolase family. As to quaternary structure, homodimer.

It catalyses the reaction (6R)-5,10-methylene-5,6,7,8-tetrahydrofolate + NADP(+) = (6R)-5,10-methenyltetrahydrofolate + NADPH. It carries out the reaction (6R)-5,10-methenyltetrahydrofolate + H2O = (6R)-10-formyltetrahydrofolate + H(+). It participates in one-carbon metabolism; tetrahydrofolate interconversion. In terms of biological role, catalyzes the oxidation of 5,10-methylenetetrahydrofolate to 5,10-methenyltetrahydrofolate and then the hydrolysis of 5,10-methenyltetrahydrofolate to 10-formyltetrahydrofolate. This is Bifunctional protein FolD from Burkholderia mallei (strain NCTC 10247).